Here is a 577-residue protein sequence, read N- to C-terminus: Arginine--tRNA ligase (577 aa).

The short motif at 122–132 is the 'HIGH' region element; it reads PNVAKEMHVGH.

It belongs to the class-I aminoacyl-tRNA synthetase family. As to quaternary structure, monomer.

It is found in the cytoplasm. The catalysed reaction is tRNA(Arg) + L-arginine + ATP = L-arginyl-tRNA(Arg) + AMP + diphosphate. The polypeptide is Arginine--tRNA ligase (Salmonella newport (strain SL254)).